The sequence spans 134 residues: Arsenate reductase (134 aa).

Residues Cys11, Cys83, and Cys90 each act as nucleophile in the active site. 2 cysteine pairs are disulfide-bonded: Cys11/Cys83 and Cys83/Cys90.

It belongs to the low molecular weight phosphotyrosine protein phosphatase family. Thioredoxin-coupled ArsC subfamily.

Its subcellular location is the cytoplasm. It catalyses the reaction arsenate + [thioredoxin]-dithiol + H(+) = arsenite + [thioredoxin]-disulfide + H2O. Its function is as follows. Catalyzes the reduction of arsenate [As(V)] to arsenite [As(III)]. The sequence is that of Arsenate reductase from Bacillus cereus (strain ZK / E33L).